We begin with the raw amino-acid sequence, 709 residues long: Polyribonucleotide nucleotidyltransferase (709 aa).

Residues aspartate 491 and aspartate 497 each coordinate Mg(2+). The KH domain occupies 557-617; sequence PKSESFMIPP…ENLQKAKTFI (61 aa). Positions 641-709 constitute an S1 motif domain; it reads GERFVGKIKK…KNKVELGLVE (69 aa).

This sequence belongs to the polyribonucleotide nucleotidyltransferase family. Mg(2+) is required as a cofactor.

The protein resides in the cytoplasm. It catalyses the reaction RNA(n+1) + phosphate = RNA(n) + a ribonucleoside 5'-diphosphate. Involved in mRNA degradation. Catalyzes the phosphorolysis of single-stranded polyribonucleotides processively in the 3'- to 5'-direction. This is Polyribonucleotide nucleotidyltransferase from Helicobacter hepaticus (strain ATCC 51449 / 3B1).